We begin with the raw amino-acid sequence, 331 residues long: MATYKDAGVNIEEGYKAVSLMKNYAAKTFTKGVINDLGSFAGMFELSGYKTPVLVSGTDGVGTKLKIAFDMKKYDTVGIDCVAMCVNDILCHGAKPLFFLDYIACGKLEAENAADLVRGVSDGCIDAGCSLIGGETAEMPGFYKEGEYDVAGFCVGVVEKDEIIDGSKIENGDVLIGIESTGIHSNGYSLVRKLIKDFNEDFNGEKIGNVLLTPTKIYVKTVLELIKKYNIHGMAHITGGGFYENIPRMFKGDFTAVINKGSFKVPEIFNHIMSLGVEEEHMYNTFNMGIGYVLCVKEEDAENIIRYIEKMGSKAYKIGHVEAGGHGVCLK.

Belongs to the AIR synthase family.

The protein resides in the cytoplasm. The catalysed reaction is 2-formamido-N(1)-(5-O-phospho-beta-D-ribosyl)acetamidine + ATP = 5-amino-1-(5-phospho-beta-D-ribosyl)imidazole + ADP + phosphate + H(+). It functions in the pathway purine metabolism; IMP biosynthesis via de novo pathway; 5-amino-1-(5-phospho-D-ribosyl)imidazole from N(2)-formyl-N(1)-(5-phospho-D-ribosyl)glycinamide: step 2/2. The chain is Phosphoribosylformylglycinamidine cyclo-ligase from Clostridium novyi (strain NT).